The sequence spans 345 residues: Phenylalanine--tRNA ligase alpha subunit (345 aa).

Position 266 (Glu-266) interacts with Mg(2+).

This sequence belongs to the class-II aminoacyl-tRNA synthetase family. Phe-tRNA synthetase alpha subunit type 1 subfamily. As to quaternary structure, tetramer of two alpha and two beta subunits. Requires Mg(2+) as cofactor.

The protein resides in the cytoplasm. It carries out the reaction tRNA(Phe) + L-phenylalanine + ATP = L-phenylalanyl-tRNA(Phe) + AMP + diphosphate + H(+). This chain is Phenylalanine--tRNA ligase alpha subunit, found in Methylibium petroleiphilum (strain ATCC BAA-1232 / LMG 22953 / PM1).